The chain runs to 180 residues: Large ribosomal subunit protein uL5 (180 aa).

It belongs to the universal ribosomal protein uL5 family. In terms of assembly, part of the 50S ribosomal subunit; part of the 5S rRNA/L5/L18/L25 subcomplex. Contacts the 5S rRNA and the P site tRNA. Forms a bridge to the 30S subunit in the 70S ribosome.

Its function is as follows. This is one of the proteins that bind and probably mediate the attachment of the 5S RNA into the large ribosomal subunit, where it forms part of the central protuberance. In the 70S ribosome it contacts protein S13 of the 30S subunit (bridge B1b), connecting the 2 subunits; this bridge is implicated in subunit movement. Contacts the P site tRNA; the 5S rRNA and some of its associated proteins might help stabilize positioning of ribosome-bound tRNAs. This is Large ribosomal subunit protein uL5 from Lactobacillus acidophilus (strain ATCC 700396 / NCK56 / N2 / NCFM).